Consider the following 325-residue polypeptide: MYIAVPAEILGIILPLLLGVAFLVLAERKVMAFVQRRKGPDVVGSFGLLQPLADGLKLILKEPISPSSANFSLFRMAPVATFMLSLVARAVVPFDYGMVLSDPNIGLLYLFAISSLGVYGIIIAGWSSNSKYAFLGALRSAAQMVPYEVSIGLILITVLICVGSRNSSEIVMAQKQIWSGIPLFPVLVMFFISRLAETNRAPFDLPEAEAESVAGYNVEYSSMGSALSFLGEYANMILMSGLCTSLSPGGWPPILDLPISKKIPGSIWFSIKVILFLFLYIWVRAAFPRYRYDQLMGLGRKVFLPLSLARVVPVSGVLVTFQWLP.

8 helical membrane passes run 5-25 (VPAE…FLVL), 79-99 (VATF…YGMV), 105-125 (IGLL…IIAG), 144-164 (MVPY…CVGS), 177-197 (IWSG…RLAE), 237-257 (ILMS…ILDL), 263-283 (IPGS…YIWV), and 302-322 (VFLP…VTFQ).

The protein belongs to the complex I subunit 1 family.

The protein resides in the mitochondrion inner membrane. The enzyme catalyses a ubiquinone + NADH + 5 H(+)(in) = a ubiquinol + NAD(+) + 4 H(+)(out). Functionally, core subunit of the mitochondrial membrane respiratory chain NADH dehydrogenase (Complex I) that is believed to belong to the minimal assembly required for catalysis. Complex I functions in the transfer of electrons from NADH to the respiratory chain. The immediate electron acceptor for the enzyme is believed to be ubiquinone. This Petunia hybrida (Petunia) protein is NADH-ubiquinone oxidoreductase chain 1 (ND1).